The chain runs to 692 residues: SH3 domain-containing protein 21 (692 aa).

Residues 1–60 (MVQSELQLQPRAGGRAEAASWGDRGNDKGGFGNPDMPSVSPGPQRPPKLSSLAYDSPPDY) are disordered. Positions 65–126 (SHPEAYRVLF…PDNFVLPPPP (62 aa)) constitute an SH3 domain. Disordered regions lie at residues 132-501 (PRKV…EVLP), 536-605 (PKGG…SQET), and 672-692 (VMQG…TQTY). Positions 177–186 (PSRDSQKLTS) are enriched in basic and acidic residues. Residues 210–220 (TQTPQQRSVSS) are compositionally biased toward polar residues. Basic and acidic residues-rich tracts occupy residues 378 to 396 (VSTR…EALQ), 490 to 501 (NEERLLRGEVLP), and 542 to 582 (SKEE…KEEV). Residues 628 to 678 (SLRGEVESLRRALELMGVQLERKLTDIWEELKSEKEQRQRLEVQVMQGTQK) are a coiled coil. Residues 673-692 (MQGTQKSQTPRIIHAQTQTY) are compositionally biased toward polar residues.

In Macaca fascicularis (Crab-eating macaque), this protein is SH3 domain-containing protein 21 (SH3D21).